A 662-amino-acid chain; its full sequence is Methyl-accepting chemotaxis protein TlpA (662 aa).

The Cytoplasmic portion of the chain corresponds to 1-16 (MKKTLTTIRRSSIARR). A helical membrane pass occupies residues 17–37 (LIISFLLILIVPITALSVSAY). Topologically, residues 38–281 (QSAVASLDVQ…IHDAASRVLI (244 aa)) are extracellular. Residues 152–228 (VTEPYESISS…KAGTELKGDW (77 aa)) form the Cache domain. A helical membrane pass occupies residues 282–302 (MASIVLAIAIGAGMTAIYFVI). Residues 303–355 (RSITKPLRRIVASAEKISEGDLTETIEINSKDELGVLSESFNHMAHSLRSLIH) form the HAMP domain. Residues 303 to 662 (RSITKPLRRI…DLTKQFKVDK (360 aa)) lie on the Cytoplasmic side of the membrane. Glutamate methyl ester (Glu) occurs at positions 370, 594, 629, and 636. Positions 374–610 (SADQTSRATE…EISAASNDIT (237 aa)) constitute a Methyl-accepting transducer domain.

The protein belongs to the methyl-accepting chemotaxis (MCP) protein family. In terms of assembly, interacts with YabA.

It is found in the cell membrane. Functionally, chemotactic-signal transducers respond to changes in the concentration of attractants and repellents in the environment, transduce a signal from the outside to the inside of the cell, and facilitate sensory adaptation through the variation of the level of methylation. All amino acids serve as attractants in B.subtilis, they appear to cause an increase in the turnover methyl groups, leading to methylation of an unidentified acceptor, while repellents have been shown to cause a decrease in methyl group turnover. The methyl groups are added by a methyltransferase and removed by a methylesterase. The polypeptide is Methyl-accepting chemotaxis protein TlpA (Bacillus subtilis (strain 168)).